Here is a 126-residue protein sequence, read N- to C-terminus: UPF0738 protein BH2850 (126 aa).

It belongs to the UPF0738 family.

This chain is UPF0738 protein BH2850, found in Halalkalibacterium halodurans (strain ATCC BAA-125 / DSM 18197 / FERM 7344 / JCM 9153 / C-125) (Bacillus halodurans).